We begin with the raw amino-acid sequence, 133 residues long: Hemiptericin (133 aa).

Its function is as follows. Antibacterial peptide. Affects Gram-negative bacteria. The chain is Hemiptericin from Pyrrhocoris apterus (Sap sucking bug).